Here is a 329-residue protein sequence, read N- to C-terminus: Endonuclease 8-like 2 (329 aa).

The Schiff-base intermediate with DNA role is filled by proline 2. The Proton donor role is filled by glutamate 3. The Proton donor; for beta-elimination activity role is filled by lysine 50. Position 50 is an N6-acetyllysine (lysine 50). Serine 68 is subject to Phosphoserine. The interval serine 68 to aspartate 116 is disordered. The segment covering proline 73 to alanine 89 has biased composition (basic and acidic residues). A compositionally biased stretch (low complexity) spans serine 90–alanine 102. Residue lysine 149 is modified to N6-acetyllysine. Asparagine 227 lines the DNA pocket. Residues glutamine 280–proline 316 form an FPG-type zinc finger. Arginine 306 serves as the catalytic Proton donor; for delta-elimination activity.

Belongs to the FPG family. In terms of assembly, binds EP300.

It is found in the nucleus. It catalyses the reaction 2'-deoxyribonucleotide-(2'-deoxyribose 5'-phosphate)-2'-deoxyribonucleotide-DNA = a 3'-end 2'-deoxyribonucleotide-(2,3-dehydro-2,3-deoxyribose 5'-phosphate)-DNA + a 5'-end 5'-phospho-2'-deoxyribonucleoside-DNA + H(+). Acetylation of Lys-50 leads to loss of DNA nicking activity. In terms of biological role, involved in base excision repair of DNA damaged by oxidation or by mutagenic agents. Has DNA glycosylase activity towards 5-hydroxyuracil and other oxidized derivatives of cytosine with a preference for mismatched double-stranded DNA (DNA bubbles). Has low or no DNA glycosylase activity towards thymine glycol, 2-hydroxyadenine, hypoxanthine and 8-oxoguanine. Has AP (apurinic/apyrimidinic) lyase activity and introduces nicks in the DNA strand. Cleaves the DNA backbone by beta-delta elimination to generate a single-strand break at the site of the removed base with both 3'- and 5'-phosphates. This chain is Endonuclease 8-like 2 (NEIL2), found in Bos taurus (Bovine).